Consider the following 63-residue polypeptide: DNA-directed RNA polymerase subunit omega (63 aa).

This sequence belongs to the RNA polymerase subunit omega family. In terms of assembly, the RNAP catalytic core consists of 2 alpha, 1 beta, 1 beta' and 1 omega subunit. When a sigma factor is associated with the core the holoenzyme is formed, which can initiate transcription.

The catalysed reaction is RNA(n) + a ribonucleoside 5'-triphosphate = RNA(n+1) + diphosphate. In terms of biological role, promotes RNA polymerase assembly. Latches the N- and C-terminal regions of the beta' subunit thereby facilitating its interaction with the beta and alpha subunits. The polypeptide is DNA-directed RNA polymerase subunit omega (Blochmanniella pennsylvanica (strain BPEN)).